A 383-amino-acid polypeptide reads, in one-letter code: Acetylornithine deacetylase (383 aa).

Residue histidine 80 coordinates Zn(2+). Residue aspartate 82 is part of the active site. A Zn(2+)-binding site is contributed by aspartate 112. Glutamate 144 is a catalytic residue. Zn(2+)-binding residues include glutamate 145, glutamate 169, and histidine 355.

This sequence belongs to the peptidase M20A family. ArgE subfamily. In terms of assembly, homodimer. Requires Zn(2+) as cofactor. It depends on Co(2+) as a cofactor. Glutathione serves as cofactor.

The protein resides in the cytoplasm. The enzyme catalyses N(2)-acetyl-L-ornithine + H2O = L-ornithine + acetate. It functions in the pathway amino-acid biosynthesis; L-arginine biosynthesis; L-ornithine from N(2)-acetyl-L-ornithine (linear): step 1/1. In terms of biological role, catalyzes the hydrolysis of the amide bond of N(2)-acetylated L-amino acids. Cleaves the acetyl group from N-acetyl-L-ornithine to form L-ornithine, an intermediate in L-arginine biosynthesis pathway, and a branchpoint in the synthesis of polyamines. This Escherichia coli (strain SMS-3-5 / SECEC) protein is Acetylornithine deacetylase.